We begin with the raw amino-acid sequence, 355 residues long: Methylthioribose-1-phosphate isomerase (355 aa).

Residues 47-49, Arg91, and Gln199 contribute to the substrate site; that span reads RGA. Asp240 (proton donor) is an active-site residue. Position 250 to 251 (250 to 251) interacts with substrate; that stretch reads NK.

The protein belongs to the eIF-2B alpha/beta/delta subunits family. MtnA subfamily.

The catalysed reaction is 5-(methylsulfanyl)-alpha-D-ribose 1-phosphate = 5-(methylsulfanyl)-D-ribulose 1-phosphate. The protein operates within amino-acid biosynthesis; L-methionine biosynthesis via salvage pathway; L-methionine from S-methyl-5-thio-alpha-D-ribose 1-phosphate: step 1/6. Catalyzes the interconversion of methylthioribose-1-phosphate (MTR-1-P) into methylthioribulose-1-phosphate (MTRu-1-P). The sequence is that of Methylthioribose-1-phosphate isomerase from Oleidesulfovibrio alaskensis (strain ATCC BAA-1058 / DSM 17464 / G20) (Desulfovibrio alaskensis).